The sequence spans 278 residues: MSAVIRVDSLNKTFARKQALFNLKLEIQAGEMVALIGASGSGKSTLLRHVAGLARCDRDNGGSIDVLGRRLQASGRLSGEVRRLRADIGYIFQQFNLVNRLSVLDNVLLGFLGRMPRWRGSLGLFSAEQKRQALEALARVGLADFAGQRASTLSGGQQQRVAIARALTQKAEVILADEPIASLDPESARKVMDILADINRHDGKTVVVTLHQVDYALRYCPRAVALKGGRILFDGSSEHLSEGFLNELYGAEGDTPLLFSDRARRGAESQPELTLARA.

The region spanning 5–253 is the ABC transporter domain; it reads IRVDSLNKTF…FLNELYGAEG (249 aa). Residue 37–44 coordinates ATP; sequence GASGSGKS.

It belongs to the ABC transporter superfamily. Phosphonates importer (TC 3.A.1.9.1) family. In terms of assembly, the complex is composed of two ATP-binding proteins (PhnC), two transmembrane proteins (PhnE) and a solute-binding protein (PhnD).

It is found in the cell inner membrane. It catalyses the reaction phosphonate(out) + ATP + H2O = phosphonate(in) + ADP + phosphate + H(+). In terms of biological role, part of the ABC transporter complex PhnCDE involved in phosphonates import. Responsible for energy coupling to the transport system. This is Phosphonates import ATP-binding protein PhnC 1 from Pseudomonas aeruginosa (strain UCBPP-PA14).